Consider the following 169-residue polypeptide: Deoxyuridine 5'-triphosphate nucleotidohydrolase (169 aa).

The segment covering 1–10 (MAENQINSPE) has biased composition (polar residues). The tract at residues 1–25 (MAENQINSPEITEPSPKVQKLDHPE) is disordered. Substrate is bound by residues 91 to 93 (RSG), 105 to 108 (GVID), G116, R159, and 164 to 165 (FG).

Belongs to the dUTPase family. As to quaternary structure, homodimer. The cofactor is Mg(2+). Vegetative and floral merismatic cells and provascular and vascular merismatic derivatives.

It carries out the reaction dUTP + H2O = dUMP + diphosphate + H(+). It participates in pyrimidine metabolism; dUMP biosynthesis; dUMP from dCTP (dUTP route): step 2/2. This enzyme is involved in nucleotide metabolism: it produces dUMP, the immediate precursor of thymidine nucleotides and it decreases the intracellular concentration of dUTP so that uracil cannot be incorporated into DNA. It may have as well a metabolic role in merismatic cells. This Solanum lycopersicum (Tomato) protein is Deoxyuridine 5'-triphosphate nucleotidohydrolase.